A 146-amino-acid chain; its full sequence is UPF0178 protein BCA_3127 (146 aa).

It belongs to the UPF0178 family.

The protein is UPF0178 protein BCA_3127 of Bacillus cereus (strain 03BB102).